The sequence spans 225 residues: Cytidylate kinase (225 aa).

Gly-10–Thr-18 contributes to the ATP binding site.

It belongs to the cytidylate kinase family. Type 1 subfamily.

It localises to the cytoplasm. It carries out the reaction CMP + ATP = CDP + ADP. The enzyme catalyses dCMP + ATP = dCDP + ADP. The chain is Cytidylate kinase from Streptococcus sanguinis (strain SK36).